A 116-amino-acid chain; its full sequence is Venom nerve growth factor (116 aa).

Intrachain disulfides connect C14-C78, C56-C106, and C66-C108.

The protein belongs to the NGF-beta family. As to quaternary structure, homodimer; non-covalently linked. Not glycosylated. As to expression, expressed by the venom gland.

Its subcellular location is the secreted. Its function is as follows. Nerve growth factor is important for the development and maintenance of the sympathetic and sensory nervous systems. It stimulates division and differentiation of sympathetic and embryonic sensory neurons as well as basal forebrain cholinergic neurons in the brain. Its relevance in the snake venom is not clear. However, it has been shown to inhibit metalloproteinase-dependent proteolysis of platelet glycoprotein Ib alpha, suggesting a metalloproteinase inhibition to prevent metalloprotease autodigestion and/or protection against prey proteases. Binds a lipid between the two protein chains in the homodimer. The lipid-bound form promotes histamine relase from mouse mast cells, contrary to the lipid-free form. The polypeptide is Venom nerve growth factor (Naja naja (Indian cobra)).